Consider the following 283-residue polypeptide: Thymidylate synthase (283 aa).

DUMP is bound at residue R22. Catalysis depends on C160, which acts as the Nucleophile. Residues 180 to 183, N191, and 221 to 223 each bind dUMP; these read RSCD and HIY. Residue D183 coordinates (6R)-5,10-methylene-5,6,7,8-tetrahydrofolate. S282 lines the (6R)-5,10-methylene-5,6,7,8-tetrahydrofolate pocket.

This sequence belongs to the thymidylate synthase family. Bacterial-type ThyA subfamily. In terms of assembly, homodimer.

It localises to the cytoplasm. It carries out the reaction dUMP + (6R)-5,10-methylene-5,6,7,8-tetrahydrofolate = 7,8-dihydrofolate + dTMP. It functions in the pathway pyrimidine metabolism; dTTP biosynthesis. In terms of biological role, catalyzes the reductive methylation of 2'-deoxyuridine-5'-monophosphate (dUMP) to 2'-deoxythymidine-5'-monophosphate (dTMP) while utilizing 5,10-methylenetetrahydrofolate (mTHF) as the methyl donor and reductant in the reaction, yielding dihydrofolate (DHF) as a by-product. This enzymatic reaction provides an intracellular de novo source of dTMP, an essential precursor for DNA biosynthesis. This Histophilus somni (strain 129Pt) (Haemophilus somnus) protein is Thymidylate synthase.